A 426-amino-acid polypeptide reads, in one-letter code: G2/mitotic-specific cyclin-A (426 aa).

Polar residues predominate over residues 1-11 (MSMVHGSSFQI). The segment at 1–22 (MSMVHGSSFQIAQDGENENQGV) is disordered.

Belongs to the cyclin family. Cyclin AB subfamily.

Functionally, essential for the control of the cell cycle at the G2/M (mitosis) transition. Interacts with the CDC2 and CDK2 protein kinases to form MPF. G2/M cyclins accumulate steadily during G2 and are abruptly destroyed at mitosis. In Patella vulgata (Common limpet), this protein is G2/mitotic-specific cyclin-A.